Reading from the N-terminus, the 94-residue chain is Integration host factor subunit beta (94 aa).

The protein belongs to the bacterial histone-like protein family. As to quaternary structure, heterodimer of an alpha and a beta chain.

This protein is one of the two subunits of integration host factor, a specific DNA-binding protein that functions in genetic recombination as well as in transcriptional and translational control. This chain is Integration host factor subunit beta, found in Brucella anthropi (strain ATCC 49188 / DSM 6882 / CCUG 24695 / JCM 21032 / LMG 3331 / NBRC 15819 / NCTC 12168 / Alc 37) (Ochrobactrum anthropi).